The chain runs to 252 residues: Mediator of RNA polymerase II transcription subunit 4 (252 aa).

Residues 70–112 adopt a coiled-coil conformation; it reads KIHQEMQVLEKEVEKRDSDIQQLQKQLKEAEHILATAVYQAKE. Positions 218 to 252 are disordered; that stretch reads HSNEFLMESLGPNKENEEDVEVMSTDSSSSSSDSD. Low complexity predominate over residues 241–252; that stretch reads STDSSSSSSDSD.

This sequence belongs to the Mediator complex subunit 4 family. In terms of assembly, component of the Mediator complex.

Its subcellular location is the nucleus. Its function is as follows. Component of the Mediator complex, a coactivator involved in the regulated transcription of nearly all RNA polymerase II-dependent genes. Mediator functions as a bridge to convey information from gene-specific regulatory proteins to the basal RNA polymerase II transcription machinery. Mediator is recruited to promoters by direct interactions with regulatory proteins and serves as a scaffold for the assembly of a functional preinitiation complex with RNA polymerase II and the general transcription factors. This chain is Mediator of RNA polymerase II transcription subunit 4 (med4), found in Xenopus tropicalis (Western clawed frog).